A 101-amino-acid polypeptide reads, in one-letter code: Large ribosomal subunit protein uL23 (101 aa).

Belongs to the universal ribosomal protein uL23 family. In terms of assembly, part of the 50S ribosomal subunit. Contacts protein L29, and trigger factor when it is bound to the ribosome.

In terms of biological role, one of the early assembly proteins it binds 23S rRNA. One of the proteins that surrounds the polypeptide exit tunnel on the outside of the ribosome. Forms the main docking site for trigger factor binding to the ribosome. In Lactobacillus helveticus (strain DPC 4571), this protein is Large ribosomal subunit protein uL23.